Reading from the N-terminus, the 169-residue chain is Alpha-S2-casein-like B (169 aa).

A signal peptide spans 1-15 (MKFIILTCLLAVALA).

It belongs to the alpha-casein family. As to expression, mammary gland specific. Secreted in milk.

It localises to the secreted. In terms of biological role, important role in the capacity of milk to transport calcium phosphate. This chain is Alpha-S2-casein-like B (Csn1s2b), found in Rattus norvegicus (Rat).